The primary structure comprises 108 residues: Replication restart protein PriB (108 aa).

In terms of domain architecture, SSB spans valine 8–glutamate 108.

The protein belongs to the PriB family. In terms of assembly, homodimer. Interacts with PriA and DnaT. Component of the replication restart primosome. Primosome assembly occurs via a 'hand-off' mechanism. PriA binds to replication forks, subsequently PriB then DnaT bind; DnaT then displaces ssDNA to generate the helicase loading substrate.

Functionally, involved in the restart of stalled replication forks, which reloads the replicative helicase on sites other than the origin of replication; the PriA-PriB pathway is the major replication restart pathway. During primosome assembly it facilitates complex formation between PriA and DnaT on DNA; stabilizes PriA on DNA. Stimulates the DNA unwinding activity of PriA helicase. The polypeptide is Replication restart protein PriB (Histophilus somni (strain 2336) (Haemophilus somnus)).